Here is a 167-residue protein sequence, read N- to C-terminus: SsrA-binding protein (167 aa).

The disordered stretch occupies residues 137-167; the sequence is GKQSHDKRDAAKERDWQRDKQRVMRRHNRDA. Basic and acidic residues predominate over residues 139 to 158; sequence QSHDKRDAAKERDWQRDKQR.

This sequence belongs to the SmpB family.

It localises to the cytoplasm. Functionally, required for rescue of stalled ribosomes mediated by trans-translation. Binds to transfer-messenger RNA (tmRNA), required for stable association of tmRNA with ribosomes. tmRNA and SmpB together mimic tRNA shape, replacing the anticodon stem-loop with SmpB. tmRNA is encoded by the ssrA gene; the 2 termini fold to resemble tRNA(Ala) and it encodes a 'tag peptide', a short internal open reading frame. During trans-translation Ala-aminoacylated tmRNA acts like a tRNA, entering the A-site of stalled ribosomes, displacing the stalled mRNA. The ribosome then switches to translate the ORF on the tmRNA; the nascent peptide is terminated with the 'tag peptide' encoded by the tmRNA and targeted for degradation. The ribosome is freed to recommence translation, which seems to be the essential function of trans-translation. The chain is SsrA-binding protein from Xanthomonas campestris pv. campestris (strain 8004).